The chain runs to 194 residues: Glycerol-3-phosphate acyltransferase (194 aa).

6 helical membrane passes run alanine 2 to isoleucine 22, leucine 52 to serine 72, aspartate 80 to phenylalanine 100, valine 112 to alanine 132, tyrosine 137 to histidine 157, and tyrosine 161 to isoleucine 181.

It belongs to the PlsY family. As to quaternary structure, probably interacts with PlsX.

Its subcellular location is the cell inner membrane. It catalyses the reaction an acyl phosphate + sn-glycerol 3-phosphate = a 1-acyl-sn-glycero-3-phosphate + phosphate. It functions in the pathway lipid metabolism; phospholipid metabolism. Its function is as follows. Catalyzes the transfer of an acyl group from acyl-phosphate (acyl-PO(4)) to glycerol-3-phosphate (G3P) to form lysophosphatidic acid (LPA). This enzyme utilizes acyl-phosphate as fatty acyl donor, but not acyl-CoA or acyl-ACP. This Fusobacterium nucleatum subsp. nucleatum (strain ATCC 25586 / DSM 15643 / BCRC 10681 / CIP 101130 / JCM 8532 / KCTC 2640 / LMG 13131 / VPI 4355) protein is Glycerol-3-phosphate acyltransferase.